A 311-amino-acid chain; its full sequence is Pyrimidine-specific ribonucleoside hydrolase RihA (311 aa).

The active site involves histidine 240.

Belongs to the IUNH family. RihA subfamily.

Hydrolyzes cytidine or uridine to ribose and cytosine or uracil, respectively. This Klebsiella pneumoniae (strain 342) protein is Pyrimidine-specific ribonucleoside hydrolase RihA.